The following is a 508-amino-acid chain: UTP--glucose-1-phosphate uridylyltransferase (508 aa).

At S13 the chain carries Phosphoserine. Residues 113-116 (LNGG), K127, Q190, and G222 each bind UTP. 115-116 (GG) lines the substrate pocket. Residue K127 participates in Mg(2+) binding. Substrate contacts are provided by residues H223 and 251 to 253 (NID). The UTP site is built by D253 and K396. D253 contributes to the Mg(2+) binding site. K396 is a catalytic residue. Residue T426 is modified to Phosphothreonine. S434 is subject to Phosphoserine. N6-acetyllysine is present on K438. S448 and S461 each carry phosphoserine. An oligomerization region spans residues 457 to 508 (HLTVSGDVTFGKNVSLKGTVIIIANHGDRIDIPPGAVLENKIVSGNLRILDH). Positions 502 to 503 (NL) are critical for end-to-end subunit interaction.

It belongs to the UDPGP type 1 family. As to quaternary structure, homooctamer.

It is found in the cytoplasm. The catalysed reaction is alpha-D-glucose 1-phosphate + UTP + H(+) = UDP-alpha-D-glucose + diphosphate. Its pathway is glycan biosynthesis; glycogen biosynthesis. Its function is as follows. UTP--glucose-1-phosphate uridylyltransferase catalyzing the conversion of glucose-1-phosphate into UDP-glucose, a crucial precursor for the production of glycogen. The polypeptide is UTP--glucose-1-phosphate uridylyltransferase (Ugp2) (Mus musculus (Mouse)).